The sequence spans 429 residues: Septin-11 (429 aa).

An N-acetylalanine modification is found at alanine 2. A Phosphoserine modification is found at serine 9. The 267-residue stretch at 38 to 304 (QGFCFNILCV…ELYRRCKLEE (267 aa)) folds into the Septin-type G domain. The tract at residues 48–55 (GETGIGKS) is G1 motif. GTP-binding positions include 48-55 (GETGIGKS), glycine 103, 184-192 (KADTIAKNE), glycine 238, and arginine 253. The segment at 100–103 (DTVG) is G3 motif. A G4 motif region spans residues 183 to 186 (AKAD). A coiled-coil region spans residues 320–415 (QETYEAKRNE…QSQAQQSGAQ (96 aa)). The disordered stretch occupies residues 398–429 (KKAAAQLLQSQAQQSGAQQTKKDKDKKNASFT). The segment covering 401–416 (AAQLLQSQAQQSGAQQ) has biased composition (low complexity). Residues 417-429 (TKKDKDKKNASFT) are compositionally biased toward basic and acidic residues.

It belongs to the TRAFAC class TrmE-Era-EngA-EngB-Septin-like GTPase superfamily. Septin GTPase family. Septins polymerize into heterooligomeric protein complexes that form filaments, and can associate with cellular membranes, actin filaments and microtubules. Forms homooligomers. GTPase activity is required for filament formation. Interacts with SEPTIN7, SEPTIN9 and SEPTIN12. Widely expressed, except in leukocytes.

Its subcellular location is the cytoplasm. It localises to the cytoskeleton. It is found in the synapse. The protein localises to the cell projection. The protein resides in the dendritic spine. Its subcellular location is the axon. Functionally, filament-forming cytoskeletal GTPase. May play a role in cytokinesis (Potential). May play a role in the cytoarchitecture of neurons, including dendritic arborization and dendritic spines, and in GABAergic synaptic connectivity. During Listeria monocytogenes infection, not required for the bacterial entry process, but restricts its efficacy. The polypeptide is Septin-11 (Homo sapiens (Human)).